The chain runs to 94 residues: Co-chaperonin GroES (94 aa).

Belongs to the GroES chaperonin family. As to quaternary structure, heptamer of 7 subunits arranged in a ring. Interacts with the chaperonin GroEL.

The protein localises to the cytoplasm. Its function is as follows. Together with the chaperonin GroEL, plays an essential role in assisting protein folding. The GroEL-GroES system forms a nano-cage that allows encapsulation of the non-native substrate proteins and provides a physical environment optimized to promote and accelerate protein folding. GroES binds to the apical surface of the GroEL ring, thereby capping the opening of the GroEL channel. This Alkaliphilus metalliredigens (strain QYMF) protein is Co-chaperonin GroES.